Consider the following 636-residue polypeptide: Polyadenylate-binding protein 1 (636 aa).

M1 carries the N-acetylmethionine modification. 4 RRM domains span residues 11–89 (ASLY…WSQR), 99–175 (GNIF…RFKS), 191–268 (TNVY…RAQK), and 294–370 (VNLY…LAQR). Residues 166–289 (RKVFVGRFKS…FEQMKQDRIT (124 aa)) form a CSDE1-binding region. Residue K299 is modified to N6-methyllysine. S315 carries the post-translational modification Phosphoserine. T319 carries the post-translational modification Phosphothreonine. R385, R419, R432, and R436 each carry omega-N-methylarginine. Residues R455 and R460 each carry the omega-N-methylated arginine; by CARM1 modification. 2 positions are modified to omega-N-methylarginine: R475 and R481. Asymmetric dimethylarginine; alternate is present on R493. Position 493 is a dimethylated arginine; alternate (R493). R493 is modified (omega-N-methylarginine; alternate). R506 is subject to Omega-N-methylarginine. K512 carries the post-translational modification N6-acetyllysine. An Omega-N-methylarginine modification is found at R518. The PABC domain occupies 542-619 (QEPLTASMLA…AVAVLQAHQA (78 aa)).

This sequence belongs to the polyadenylate-binding protein type-1 family. May form homodimers. Component of a multisubunit autoregulatory ribonucleoprotein complex (ARC), at least composed of IGF2BP1, PABPC1 and CSDE1. Directly interacts with IGF2BP1. Part of a complex associated with the FOS mCRD domain and consisting of HNRPD, SYNCRIP, PAIP1 and CSDE1/UNR. Interacts with PAIP1 and PAIP2 (via the PABPC1-interacting motifs PAM1 and PAM2). Interacts with PAIP1 with a 1:1 stoichiometry and with PAIP2 with a 1:2 stoichiometry. The interaction with CSDE1 is direct and RNA-independent. Found in a mRNP complex with YBX2. Interacts with TENT2/GLD2. Identified in the spliceosome C complex. Identified in a mRNP complex, at least composed of DHX9, DDX3X, ELAVL1, HNRNPU, IGF2BP1, ILF3, PABPC1, PCBP2, PTBP2, STAU1, STAU2, SYNCRIP and YBX1. The interaction with DDX3X is direct and RNA-independent. This interaction increases in stressed cells and decreases during cell recovery. Identified in a IGF2BP1-dependent mRNP granule complex containing untranslated mRNAs. Interacts with NXF1/TAP. Interacts with PIWIL1. Interacts with AGO1, AGO2, GSPT1 and GSPT2. Interacts with LARP4B. Interacts (via the second and third RRM domains and the C-terminus) with PAIP2B (via central acidic portion and C-terminus). Forms a complex with LARP1 and SHFL. Interacts with LARP4. Interacts with ZFC3H1 in a RNase-sensitive manner. Interacts with TRIM71 (via NHL repeats) in an RNA-dependent manner. Interacts with TENT5C; the interaction has no effect on TENT5C poly(A) polymerase function. Interacts with G3BP1 and G3BP2. Interacts with ENDOV; the interaction is RNA-dependent and stimulates ENDOV activity. Interacts with UPF1; the interaction is RNA-dependent. Interacts with IGF2BP2 and IGF2BP3. May interact with SETX. Interacts with RBM46. Interacts with PAN3. Post-translationally, phosphorylated by MAPKAPK2. Methylated by CARM1. Arg-493 is dimethylated, probably to asymmetric dimethylarginine.

The protein resides in the cytoplasm. It localises to the stress granule. The protein localises to the nucleus. It is found in the cell projection. Its subcellular location is the lamellipodium. In terms of biological role, binds the poly(A) tail of mRNA, including that of its own transcript, and regulates processes of mRNA metabolism such as pre-mRNA splicing and mRNA stability. Its function in translational initiation regulation can either be enhanced by PAIP1 or repressed by PAIP2. Can probably bind to cytoplasmic RNA sequences other than poly(A) in vivo. Binds to N6-methyladenosine (m6A)-containing mRNAs and contributes to MYC stability by binding to m6A-containing MYC mRNAs. Involved in translationally coupled mRNA turnover. Implicated with other RNA-binding proteins in the cytoplasmic deadenylation/translational and decay interplay of the FOS mRNA mediated by the major coding-region determinant of instability (mCRD) domain. Involved in regulation of nonsense-mediated decay (NMD) of mRNAs containing premature stop codons; for the recognition of premature termination codons (PTC) and initiation of NMD a competitive interaction between UPF1 and PABPC1 with the ribosome-bound release factors is proposed. By binding to long poly(A) tails, may protect them from uridylation by ZCCHC6/ZCCHC11 and hence contribute to mRNA stability. This chain is Polyadenylate-binding protein 1 (PABPC1), found in Pongo abelii (Sumatran orangutan).